Reading from the N-terminus, the 1202-residue chain is Phospholipid-transporting ATPase 10 (1202 aa).

Over 1–73 (MAGPSRRRRR…STKYTVASFF (73 aa)) the chain is Cytoplasmic. A helical transmembrane segment spans residues 74 to 95 (PKSLFEQFRRVANFYFLVTGIL). Over 96–99 (SLTD) the chain is Extracellular. Residues 100 to 122 (LSPYGAVSALLPLALVISATMVK) form a helical membrane-spanning segment. Residues 123-305 (EGIEDWRRKQ…SRIERTMDKI (183 aa)) lie on the Cytoplasmic side of the membrane. The chain crosses the membrane as a helical span at residues 306 to 327 (IYLMFGLVFLMSFVGSIIFGVE). Over 328–364 (TREDKVKNGRTERWYLKPDDADIFFDPERAPMAAIYH) the chain is Extracellular. Residues 365 to 382 (FFTATMLYSYFIPISLYV) traverse the membrane as a helical segment. Residues 383–920 (SIEIVKVLQS…HGHWCYSRIA (538 aa)) lie on the Cytoplasmic side of the membrane. The 4-aspartylphosphate intermediate role is filled by Asp-430. 2 residues coordinate Mg(2+): Asp-865 and Asp-869. Residues 921–940 (SMICYFFYKNITFGVTVFLY) traverse the membrane as a helical segment. Residues 941-954 (EAYTSFSGQPAYND) are Extracellular-facing. A helical transmembrane segment spans residues 955 to 974 (WFLSLFNVFFSSLPVIALGV). The Cytoplasmic portion of the chain corresponds to 975–1004 (FDQDVSARFCYKFPLLYQEGVQNILFSWKR). Residues 1005–1027 (IIGWMFNGFISALAIFFLCKESL) form a helical membrane-spanning segment. Residues 1028-1040 (KHQLFDPDGKTAG) lie on the Extracellular side of the membrane. The chain crosses the membrane as a helical span at residues 1041 to 1063 (REILGGTMYTCVVWVVNLQMALS). Topologically, residues 1064–1069 (ISYFTW) are cytoplasmic. A helical membrane pass occupies residues 1070–1090 (VQHIVIWGSIAFWYIFLMIYG). The Extracellular portion of the chain corresponds to 1091 to 1107 (AMTPSFSTDAYMVFLEA). A helical transmembrane segment spans residues 1108–1132 (LAPAPSYWLTTLFVMIFALIPYFVY). Topologically, residues 1133–1202 (KSVQMRFFPK…DQIYKDLVGV (70 aa)) are cytoplasmic.

The protein belongs to the cation transport ATPase (P-type) (TC 3.A.3) family. Type IV subfamily.

Its subcellular location is the cell membrane. The catalysed reaction is ATP + H2O + phospholipidSide 1 = ADP + phosphate + phospholipidSide 2.. Involved in transport of phospholipids. The polypeptide is Phospholipid-transporting ATPase 10 (Arabidopsis thaliana (Mouse-ear cress)).